Reading from the N-terminus, the 184-residue chain is Protein GrpE (184 aa).

Residues 1 to 10 (MSQETEKDLE) show a composition bias toward basic and acidic residues. The interval 1–38 (MSQETEKDLEQTQNEELVEEAQSDEKKDQEVDPVEAAQ) is disordered.

The protein belongs to the GrpE family. Homodimer.

Its subcellular location is the cytoplasm. In terms of biological role, participates actively in the response to hyperosmotic and heat shock by preventing the aggregation of stress-denatured proteins, in association with DnaK and GrpE. It is the nucleotide exchange factor for DnaK and may function as a thermosensor. Unfolded proteins bind initially to DnaJ; upon interaction with the DnaJ-bound protein, DnaK hydrolyzes its bound ATP, resulting in the formation of a stable complex. GrpE releases ADP from DnaK; ATP binding to DnaK triggers the release of the substrate protein, thus completing the reaction cycle. Several rounds of ATP-dependent interactions between DnaJ, DnaK and GrpE are required for fully efficient folding. The sequence is that of Protein GrpE from Sulfurovum sp. (strain NBC37-1).